A 406-amino-acid chain; its full sequence is Phosphatidylinositol 5-phosphate 4-kinase type-2 alpha (406 aa).

N-acetylalanine is present on A2. Residue T3 is modified to Phosphothreonine. S14 carries the post-translational modification Phosphoserine. The region spanning 33-405 (ASDPLLSVLM…RFLDFIGHIL (373 aa)) is the PIPK domain. Residues 59-65 (VMLMPDD) form a required for interaction with PIP5K1A region. N6-acetyllysine is present on residues K89 and K145. The segment at 288 to 329 (QEEVECEENDGEEEGESDGTHPVGTPPDSPGNTLNSSPPLAP) is disordered. A compositionally biased stretch (acidic residues) spans 289 to 304 (EEVECEENDGEEEGES).

In terms of assembly, homodimer. Interacts with PIP4K2B; the interaction may regulate localization to the nucleus. Probably interacts with PIP5K1A; the interaction inhibits PIP5K1A kinase activity. In terms of processing, phosphorylated in tyrosines. Phosphorylation is induced by light and increases kinase activity. Expressed ubiquitously, with high levels in the brain. Present in most tissues, except notably skeletal muscle and small intestine.

The protein resides in the cell membrane. Its subcellular location is the nucleus. It localises to the lysosome. The protein localises to the cytoplasm. It is found in the photoreceptor inner segment. The protein resides in the cell projection. Its subcellular location is the cilium. It localises to the photoreceptor outer segment. It carries out the reaction a 1,2-diacyl-sn-glycero-3-phospho-(1D-myo-inositol-5-phosphate) + ATP = a 1,2-diacyl-sn-glycero-3-phospho-(1D-myo-inositol-4,5-bisphosphate) + ADP + H(+). The enzyme catalyses 1,2-dihexadecanoyl-sn-glycero-3-phospho-(1D-myo-inositol-5-phosphate) + ATP = 1,2-dihexadecanoyl-sn-glycero-3-phospho-(1D-myo-inositol-4,5-bisphosphate) + ADP + H(+). It catalyses the reaction 1,2-dihexadecanoyl-sn-glycero-3-phospho-(1D-myo-inositol-5-phosphate) + GTP = 1,2-dihexadecanoyl-sn-glycero-3-phospho-(1D-myo-inositol-4,5-bisphosphate) + GDP + H(+). In rod outer segments, activated by light. Inhibited by I-OMe tyrphostin AG-538 (I-OMe-AG-538), acting as an ATP-competitive inhibitor. Functionally, catalyzes the phosphorylation of phosphatidylinositol 5-phosphate (PtdIns5P) on the fourth hydroxyl of the myo-inositol ring, to form phosphatidylinositol 4,5-bisphosphate (PtdIns(4,5)P2). Has both ATP- and GTP-dependent kinase activities. May exert its function by regulating the levels of PtdIns5P, which functions in the cytosol by increasing AKT activity and in the nucleus signals through ING2. May regulate the pool of cytosolic PtdIns5P in response to the activation of tyrosine phosphorylation. Required for lysosome-peroxisome membrane contacts and intracellular cholesterol transport through modulating peroxisomal PtdIns(4,5)P2 level. In collaboration with PIP4K2B, has a role in mediating autophagy in times of nutrient stress. Required for autophagosome-lysosome fusion and the regulation of cellular lipid metabolism. May be involved in thrombopoiesis, and the terminal maturation of megakaryocytes and regulation of their size. Negatively regulates insulin signaling through a catalytic-independent mechanism. PIP4Ks interact with PIP5Ks and suppress PIP5K-mediated PtdIns(4,5)P2 synthesis and insulin-dependent conversion to PtdIns(3,4,5)P3. The chain is Phosphatidylinositol 5-phosphate 4-kinase type-2 alpha from Homo sapiens (Human).